A 129-amino-acid chain; its full sequence is Large ribosomal subunit protein eL32 (129 aa).

Belongs to the eukaryotic ribosomal protein eL32 family.

In Archaeoglobus fulgidus (strain ATCC 49558 / DSM 4304 / JCM 9628 / NBRC 100126 / VC-16), this protein is Large ribosomal subunit protein eL32 (rpl32e).